A 359-amino-acid chain; its full sequence is Probable dual-specificity RNA methyltransferase RlmN (359 aa).

Catalysis depends on Glu91, which acts as the Proton acceptor. The Radical SAM core domain occupies 97 to 329 (QHYGHSVCVT…KKNGVNCVVR (233 aa)). Cys104 and Cys340 are oxidised to a cystine. 3 residues coordinate [4Fe-4S] cluster: Cys111, Cys115, and Cys118. S-adenosyl-L-methionine contacts are provided by residues 163–164 (GE), Ser195, 218–220 (SLH), and Asn296. Cys340 acts as the S-methylcysteine intermediate in catalysis.

It belongs to the radical SAM superfamily. RlmN family. [4Fe-4S] cluster serves as cofactor.

It is found in the cytoplasm. It catalyses the reaction adenosine(2503) in 23S rRNA + 2 reduced [2Fe-2S]-[ferredoxin] + 2 S-adenosyl-L-methionine = 2-methyladenosine(2503) in 23S rRNA + 5'-deoxyadenosine + L-methionine + 2 oxidized [2Fe-2S]-[ferredoxin] + S-adenosyl-L-homocysteine. The enzyme catalyses adenosine(37) in tRNA + 2 reduced [2Fe-2S]-[ferredoxin] + 2 S-adenosyl-L-methionine = 2-methyladenosine(37) in tRNA + 5'-deoxyadenosine + L-methionine + 2 oxidized [2Fe-2S]-[ferredoxin] + S-adenosyl-L-homocysteine. In terms of biological role, specifically methylates position 2 of adenine 2503 in 23S rRNA and position 2 of adenine 37 in tRNAs. The protein is Probable dual-specificity RNA methyltransferase RlmN of Streptococcus pyogenes serotype M18 (strain MGAS8232).